Reading from the N-terminus, the 240-residue chain is Ribonuclease 3 (240 aa).

An RNase III domain is found at D13–G143. E53 contacts Mg(2+). D57 is an active-site residue. Residues D129 and E132 each coordinate Mg(2+). Residue E132 is part of the active site. The DRBM domain occupies D170 to A238.

The protein belongs to the ribonuclease III family. Homodimer. Mg(2+) serves as cofactor.

Its subcellular location is the cytoplasm. The enzyme catalyses Endonucleolytic cleavage to 5'-phosphomonoester.. Functionally, digests double-stranded RNA. Involved in the processing of primary rRNA transcript to yield the immediate precursors to the large and small rRNAs (23S and 16S). Processes some mRNAs, and tRNAs when they are encoded in the rRNA operon. Processes pre-crRNA and tracrRNA of type II CRISPR loci if present in the organism. In Nocardia farcinica (strain IFM 10152), this protein is Ribonuclease 3.